We begin with the raw amino-acid sequence, 55 residues long: Accessory gland-specific peptide 70A (55 aa).

Residues 1–19 (MKTLSLFLVLVCLLGLVQS) form the signal peptide. Residues Pro28, Pro32, Pro34, and Pro38 each carry the hydroxyproline modification. An intrachain disulfide couples Cys43 to Cys55.

Main cells of the accessory glands of males (paragonial gland).

It localises to the secreted. Represses female sexual receptivity and stimulates oviposition. This Drosophila mauritiana (Fruit fly) protein is Accessory gland-specific peptide 70A (Acp70A).